The primary structure comprises 233 residues: 2-C-methyl-D-erythritol 4-phosphate cytidylyltransferase (233 aa).

This sequence belongs to the IspD/TarI cytidylyltransferase family. IspD subfamily.

The catalysed reaction is 2-C-methyl-D-erythritol 4-phosphate + CTP + H(+) = 4-CDP-2-C-methyl-D-erythritol + diphosphate. It functions in the pathway isoprenoid biosynthesis; isopentenyl diphosphate biosynthesis via DXP pathway; isopentenyl diphosphate from 1-deoxy-D-xylulose 5-phosphate: step 2/6. Catalyzes the formation of 4-diphosphocytidyl-2-C-methyl-D-erythritol from CTP and 2-C-methyl-D-erythritol 4-phosphate (MEP). In Gloeobacter violaceus (strain ATCC 29082 / PCC 7421), this protein is 2-C-methyl-D-erythritol 4-phosphate cytidylyltransferase.